We begin with the raw amino-acid sequence, 464 residues long: Probable 3-ketoacyl-CoA synthase 21 (464 aa).

The helical transmembrane segment at 21 to 41 (LLSSGVSVFEIFAGLLVVHLI) threads the bilayer. The 292-residue stretch at 42-333 (YQRIRTRVKV…VIQHILCKKL (292 aa)) folds into the FAE domain. Catalysis depends on residues C187, H352, H356, H385, and N389.

It belongs to the thiolase-like superfamily. Chalcone/stilbene synthases family. As to expression, expressed in flowers.

The protein localises to the membrane. It carries out the reaction a very-long-chain acyl-CoA + malonyl-CoA + H(+) = a very-long-chain 3-oxoacyl-CoA + CO2 + CoA. The protein operates within lipid metabolism; fatty acid biosynthesis. This Arabidopsis thaliana (Mouse-ear cress) protein is Probable 3-ketoacyl-CoA synthase 21.